The primary structure comprises 140 residues: 3-hydroxyacyl-[acyl-carrier-protein] dehydratase FabZ (140 aa).

His47 is an active-site residue.

It belongs to the thioester dehydratase family. FabZ subfamily.

It localises to the cytoplasm. The catalysed reaction is a (3R)-hydroxyacyl-[ACP] = a (2E)-enoyl-[ACP] + H2O. Involved in unsaturated fatty acids biosynthesis. Catalyzes the dehydration of short chain beta-hydroxyacyl-ACPs and long chain saturated and unsaturated beta-hydroxyacyl-ACPs. This is 3-hydroxyacyl-[acyl-carrier-protein] dehydratase FabZ from Streptococcus agalactiae serotype III (strain NEM316).